A 217-amino-acid chain; its full sequence is Phosphoenolpyruvate guanylyltransferase (217 aa).

Phosphoenolpyruvate contacts are provided by threonine 150, glycine 165, and serine 168.

This sequence belongs to the CofC family.

The catalysed reaction is phosphoenolpyruvate + GTP + H(+) = enolpyruvoyl-2-diphospho-5'-guanosine + diphosphate. Its pathway is cofactor biosynthesis; coenzyme F420 biosynthesis. Its function is as follows. Guanylyltransferase that catalyzes the activation of phosphoenolpyruvate (PEP) as enolpyruvoyl-2-diphospho-5'-guanosine, via the condensation of PEP with GTP. It is involved in the biosynthesis of coenzyme F420, a hydride carrier cofactor. This Mycobacterium ulcerans (strain Agy99) protein is Phosphoenolpyruvate guanylyltransferase.